We begin with the raw amino-acid sequence, 1894 residues long: Adenylate kinase 9 (1894 aa).

The segment at 32–286 is adenylate kinase 1; the sequence is TCFIIFGKPG…LFMTVIERLK (255 aa). 41-46 contributes to the ATP binding site; the sequence is GAGKTT. The interval 61-90 is NMP 1; the sequence is EALSVLEEHIAAEKETGAMLQSLLVSGHSI. Position 117–120 (117–120) interacts with AMP; it reads EMPS. Residues 161–206 form an LID 1 region; the sequence is GQRQHSTTGYVYTREQWDPEIIESRRRKKRDFPKEGKSEEEEEEEE. The tract at residues 188–211 is disordered; it reads KKRDFPKEGKSEEEEEEEEQEEEE. The span at 198–211 shows a compositional bias: acidic residues; sequence SEEEEEEEEQEEEE. Arginine 230 is an AMP binding site. The stretch at 451 to 478 forms a coiled coil; sequence IKVVQQRLLNEKQAKQQEERTLKELQVQ. The segment at 492–533 is disordered; sequence SEELPSLENTGSKLSSLEIGQEDKSKSETTITGDQVKDVSTE. Residues 651-691 are a coiled coil; it reads LERLQEEAQAKKREEEEIRKVKEEELRLEEEKQRLMELATK. 2 disordered regions span residues 710–789 and 876–911; these read PYPD…LGSE and EEEAEDYQAETEIDEEQEEEEEEEEEGEEKIKEKRR. Over residues 715 to 736 the composition is skewed to acidic residues; sequence PDNEAEEEVEDSEIHEESEAQE. Composition is skewed to basic and acidic residues over residues 757–768 and 777–789; these read EGDHEPEAEFKP and ETEKDPKEGLGSE. Acidic residues predominate over residues 876 to 903; it reads EEEAEDYQAETEIDEEQEEEEEEEEEGE. The segment at 976–1187 is adenylate kinase 2; sequence LRICLLGPHG…VAKRRAELIL (212 aa). 985 to 990 serves as a coordination point for ATP; it reads GSGKTV. An NMP 2 region spans residues 1005–1036; that stretch reads QFDEFLQEKMLLKAERKFGPEFEDDSEEEQLV. AMP is bound by residues 1034–1036 and 1063–1066; these read QLV and VQLT. Residues 1108–1128 are LID 2; that stretch reads DGFPRHPEEAQFLGERGFFPD. Residues 1223-1241 show a composition bias toward acidic residues; it reads EFPKDEEEMSEEDEEQEAD. Positions 1223–1243 are disordered; it reads EFPKDEEEMSEEDEEQEADAT. The tract at residues 1395–1584 is adenylate kinase 3; sequence VRIMIVGPPK…VWNEVLKDIQ (190 aa). 1404 to 1409 lines the ATP pocket; that stretch reads KSGKTT. Positions 1424–1455 are NMP 3; that stretch reads SVGDALRGMLNNHPDSELSLMLNWHLHKGKTV. Residues arginine 1430, 1482–1485, and glutamine 1489 contribute to the AMP site; that span reads GYPV. Residues 1519-1533 are LID 3; the sequence is LEKKTEQSMSYPLHN.

Belongs to the adenylate kinase family. In terms of tissue distribution, highly expressed in the testis.

Its subcellular location is the cytoplasm. It is found in the nucleus. The protein localises to the cell projection. It localises to the cilium. The protein resides in the flagellum. The enzyme catalyses a ribonucleoside 5'-phosphate + ATP = a ribonucleoside 5'-diphosphate + ADP. The catalysed reaction is AMP + ATP = 2 ADP. It catalyses the reaction GTP + AMP = GDP + ADP. It carries out the reaction CMP + ATP = CDP + ADP. The enzyme catalyses GTP + CMP = CDP + GDP. The catalysed reaction is dAMP + ATP = dADP + ADP. It catalyses the reaction dCMP + ATP = dCDP + ADP. It carries out the reaction a ribonucleoside 5'-diphosphate + ATP = a ribonucleoside 5'-triphosphate + ADP. The enzyme catalyses CDP + ATP = CTP + ADP. The catalysed reaction is CDP + GTP = CTP + GDP. It catalyses the reaction GDP + ATP = GTP + ADP. It carries out the reaction UDP + ATP = UTP + ADP. The enzyme catalyses GTP + UDP = UTP + GDP. The catalysed reaction is dTDP + GTP = dTTP + GDP. It catalyses the reaction dCDP + ATP = dCTP + ADP. It carries out the reaction dCDP + GTP = dCTP + GDP. The enzyme catalyses dGDP + ATP = dGTP + ADP. The catalysed reaction is dTDP + ATP = dTTP + ADP. It catalyses the reaction dADP + GTP = dATP + GDP. Functionally, broad-specificity nucleoside phosphate kinase involved in cellular nucleotide homeostasis by catalyzing nucleoside-phosphate interconversions. Similar to other adenylate kinases, preferentially catalyzes the phosphorylation of the nucleoside monophosphate AMP with ATP as phosphate donor to produce ADP. In vitro, can also catalyze the phosphorylation of CMP, dAMP and dCMP and use GTP as an alternate phosphate donor. Moreover, exhibits a diphosphate kinase activity, producing ATP, CTP, GTP, UTP, TTP, dATP, dCTP and dGTP from the corresponding diphosphate substrates with either ATP or GTP as phosphate donors. For this activity shows the following substrate preference CDP &gt; UDP &gt; ADP &gt; TDP. This is Adenylate kinase 9 from Mus musculus (Mouse).